Reading from the N-terminus, the 144-residue chain is L-fucose mutarotase (144 aa).

H22 (proton donor) is an active-site residue. Substrate is bound by residues D30, R109, and Y131 to N133.

This sequence belongs to the RbsD / FucU family. FucU mutarotase subfamily. Homodecamer.

Its subcellular location is the cytoplasm. It catalyses the reaction alpha-L-fucose = beta-L-fucose. It functions in the pathway carbohydrate metabolism; L-fucose metabolism. Functionally, involved in the anomeric conversion of L-fucose. The polypeptide is L-fucose mutarotase (Histophilus somni (strain 2336) (Haemophilus somnus)).